The following is a 107-amino-acid chain: Large ribosomal subunit protein uL24 (107 aa).

The protein belongs to the universal ribosomal protein uL24 family. In terms of assembly, part of the 50S ribosomal subunit.

In terms of biological role, one of two assembly initiator proteins, it binds directly to the 5'-end of the 23S rRNA, where it nucleates assembly of the 50S subunit. Functionally, one of the proteins that surrounds the polypeptide exit tunnel on the outside of the subunit. The chain is Large ribosomal subunit protein uL24 from Caldanaerobacter subterraneus subsp. tengcongensis (strain DSM 15242 / JCM 11007 / NBRC 100824 / MB4) (Thermoanaerobacter tengcongensis).